Here is a 783-residue protein sequence, read N- to C-terminus: Probable potassium transporter 2 (783 aa).

The Cytoplasmic portion of the chain corresponds to 1–21; sequence MDAEAGVGGADQLPWRQHYRN. A helical membrane pass occupies residues 22 to 42; sequence LLLLAYQSFGVVYGDLSTSPL. Over 43-61 the chain is Extracellular; it reads YVYKSTFSGRLRRYQDEQT. A helical transmembrane segment spans residues 62–82; sequence VFGVLSLIFWTFTLIPLLKYV. Residues 83 to 152 are Cytoplasmic-facing; that stretch reads TIVLSADDNG…FMEKHKNART (70 aa). The chain crosses the membrane as a helical span at residues 153 to 173; it reads VLLLIVLCGASMMIGDGILTP. Over 174–189 the chain is Extracellular; sequence AISVLSSMSGLKVRAT. Residues 190 to 210 form a helical membrane-spanning segment; that stretch reads GLHDRSVVLLSCIVLVGLFAL. At 211 to 217 the chain is on the cytoplasmic side; the sequence is QHRGTQK. The helical transmembrane segment at 218-238 threads the bilayer; the sequence is VAFMFAPIVVIWLFCIGGIGL. The Extracellular segment spans residues 239-268; sequence YNIIHWNPRIYQALSPYYIVKFFRTTGKDG. Residues 269 to 289 form a helical membrane-spanning segment; the sequence is WIALGGILLSMTGCEAMFADL. The Cytoplasmic portion of the chain corresponds to 290–298; sequence GHFTSASVR. A helical membrane pass occupies residues 299–319; that stretch reads LAFITIIYPCLILQYMGQAAF. Residues 320–338 lie on the Extracellular side of the membrane; sequence LSKNILDMPTGFYDSIPGP. Residues 339 to 359 traverse the membrane as a helical segment; that stretch reads IFWPVFVVATLAAVVGSQAVI. The Cytoplasmic segment spans residues 360–390; sequence SATFSIVKQCHSLGCFPRVKVVHTSRWIYGQ. Residues 391-411 traverse the membrane as a helical segment; sequence IYIPEINWILMVLCVAVTVAF. Residues 412–422 are Extracellular-facing; that stretch reads RDITLIGNAYG. A helical transmembrane segment spans residues 423–443; it reads VACMTVMFVTTFLMALIMIFV. Topologically, residues 444 to 447 are cytoplasmic; the sequence is WQKN. The chain crosses the membrane as a helical span at residues 448 to 468; it reads IIFALSFFLLFGSVEVVYLSS. The Extracellular segment spans residues 469–475; it reads SLMKVTQ. A helical membrane pass occupies residues 476–496; that stretch reads GGWVPLVLALIFMSVMYIWHY. At 497 to 783 the chain is on the cytoplasmic side; that stretch reads GTRKKYQYDL…LIEVGMAYQV (287 aa). The disordered stretch occupies residues 662 to 691; sequence DLADSMTMRSTKSESLRSLQSSYEQESPNV. Over residues 677 to 691 the composition is skewed to polar residues; sequence LRSLQSSYEQESPNV.

Belongs to the HAK/KUP transporter (TC 2.A.72.3) family.

It is found in the cell membrane. It carries out the reaction K(+)(in) = K(+)(out). The catalysed reaction is Na(+)(in) = Na(+)(out). Its function is as follows. High-affinity potassium transporter. Can transport sodium under high sodium and low potassium concentrations in the extracellular environment. The protein is Probable potassium transporter 2 (HAK2) of Oryza sativa subsp. japonica (Rice).